Reading from the N-terminus, the 484-residue chain is 1,4-beta-D-glucan cellobiohydrolase CEL6A (484 aa).

Positions 1-17 (MAKRLLLTAALAATTLA) are cleaved as a signal peptide. The CBM1 domain maps to 26–62 (NCGSVWSQCGGQGWTGATCCASGSTCVAQNQWYSQCL). 2 cysteine pairs are disulfide-bonded: Cys34-Cys51 and Cys45-Cys61. The tract at residues 68–98 (TTTAQAPSSTRTTTSSSSRPTSSSISTSAVN) is disordered. Positions 171 and 173 each coordinate substrate. The N-linked (GlcNAc...) asparagine glycan is linked to Asn175. Residues 208-230 (YDLPDRDCAAAASNGEWAIADGG) form a substrate binding loop 1 region. Residue Asp260 is the Proton donor of the active site. Positions 305, 308, 344, 405, 433, and 437 each coordinate substrate. Residues 431 to 469 (WIKPGGECDGTSDTTAARYDHHCGFADALKPAPEAGQWF) are substrate binding loop 2. Asp439 functions as the Proton acceptor in the catalytic mechanism.

It belongs to the glycosyl hydrolase 6 (cellulase B) family. In terms of assembly, monomer. In terms of processing, both N- and O-glycosylated.

It is found in the secreted. It catalyses the reaction Hydrolysis of (1-&gt;4)-beta-D-glucosidic linkages in cellulose and cellotetraose, releasing cellobiose from the non-reducing ends of the chains.. In terms of biological role, exoglucanase that plays an important function in biomass degradation by catalyzing the hydrolysis of the non-reducing end beta-1,4-glucosidic linkages in cellulose and cellotetraose to release cellobiose. Hydrolyzes crystalline and amorphous cellulose but is inactive on hydroxyethyl cellulose, mannan, galactomannan, xyloglucan, arabinoxylan, arabinan, xylan, and pectin. This is 1,4-beta-D-glucan cellobiohydrolase CEL6A from Podospora anserina (strain S / ATCC MYA-4624 / DSM 980 / FGSC 10383) (Pleurage anserina).